We begin with the raw amino-acid sequence, 214 residues long: Large ribosomal subunit protein uL3 (214 aa).

Residues 133-154 (GLGAGHGTQRKHRSPGSIGGCA) are disordered.

The protein belongs to the universal ribosomal protein uL3 family. Part of the 50S ribosomal subunit. Forms a cluster with proteins L14 and L19.

Functionally, one of the primary rRNA binding proteins, it binds directly near the 3'-end of the 23S rRNA, where it nucleates assembly of the 50S subunit. This chain is Large ribosomal subunit protein uL3, found in Streptomyces avermitilis (strain ATCC 31267 / DSM 46492 / JCM 5070 / NBRC 14893 / NCIMB 12804 / NRRL 8165 / MA-4680).